Here is a 355-residue protein sequence, read N- to C-terminus: tRNA-specific 2-thiouridylase MnmA (355 aa).

Residues 6-13 (LLSGGVDS) and L33 each bind ATP. Residue C100 is the Nucleophile of the active site. An intrachain disulfide couples C100 to C195. An ATP-binding site is contributed by G123. The segment at 145–147 (KDQ) is interaction with tRNA. Residue C195 is the Cysteine persulfide intermediate of the active site.

It belongs to the MnmA/TRMU family.

It is found in the cytoplasm. It carries out the reaction S-sulfanyl-L-cysteinyl-[protein] + uridine(34) in tRNA + AH2 + ATP = 2-thiouridine(34) in tRNA + L-cysteinyl-[protein] + A + AMP + diphosphate + H(+). Catalyzes the 2-thiolation of uridine at the wobble position (U34) of tRNA, leading to the formation of s(2)U34. The chain is tRNA-specific 2-thiouridylase MnmA from Borrelia garinii subsp. bavariensis (strain ATCC BAA-2496 / DSM 23469 / PBi) (Borreliella bavariensis).